Reading from the N-terminus, the 156-residue chain is Cell division protein SepF (156 aa).

The protein belongs to the SepF family. Homodimer. Interacts with FtsZ.

It localises to the cytoplasm. Cell division protein that is part of the divisome complex and is recruited early to the Z-ring. Probably stimulates Z-ring formation, perhaps through the cross-linking of FtsZ protofilaments. Its function overlaps with FtsA. This chain is Cell division protein SepF, found in Bacillus cytotoxicus (strain DSM 22905 / CIP 110041 / 391-98 / NVH 391-98).